Consider the following 337-residue polypeptide: MKKTLIALSVSAAAMATGVNAAELYNQDGTSLEMGGRAEARLSMKDGDAQDNSRIRLNFLGTQAINDNLYGVGFWEGEFTTNEQGGVDGDVNKDSSNLDTRYAYAGLGGAWGEFTYGKNEGALGVITDFTDIMAYHGNSAADKLAVADRSDNMMSYKGQFENLSVKASYRFADRKLNDAGTEYTDNGQDGYSLSAIYAVADTGLELGAGYADQDEANEYMLAASYTMGDLYFAGIFTDGEKAKTEGDYTGYELAGAYTLGQTVFTTTYNNAETNNETSANNFAVDASYYFKPNFRGYVSYNFNLIDSGDKLGKVGGNTTASKADAEDELALGLRYDF.

An N-terminal signal peptide occupies residues Met-1–Ala-21.

It belongs to the Gram-negative porin family. As to quaternary structure, homotrimer.

It localises to the cell outer membrane. Forms pores that allow passive diffusion of small molecules across the outer membrane. This chain is Outer membrane protein U (ompU), found in Vibrio parahaemolyticus serotype O3:K6 (strain RIMD 2210633).